A 203-amino-acid polypeptide reads, in one-letter code: Small ribosomal subunit protein uS4 (203 aa).

One can recognise an S4 RNA-binding domain in the interval 93-173; sequence RRLDNVVFRS…FPSWIQVDKA (81 aa).

This sequence belongs to the universal ribosomal protein uS4 family. In terms of assembly, part of the 30S ribosomal subunit. Contacts protein S5. The interaction surface between S4 and S5 is involved in control of translational fidelity.

In terms of biological role, one of the primary rRNA binding proteins, it binds directly to 16S rRNA where it nucleates assembly of the body of the 30S subunit. Functionally, with S5 and S12 plays an important role in translational accuracy. This chain is Small ribosomal subunit protein uS4, found in Chlorobium limicola (strain DSM 245 / NBRC 103803 / 6330).